We begin with the raw amino-acid sequence, 123 residues long: Large ribosomal subunit protein bL12 (123 aa).

Belongs to the bacterial ribosomal protein bL12 family. Homodimer. Part of the ribosomal stalk of the 50S ribosomal subunit. Forms a multimeric L10(L12)X complex, where L10 forms an elongated spine to which 2 to 4 L12 dimers bind in a sequential fashion. Binds GTP-bound translation factors.

Its function is as follows. Forms part of the ribosomal stalk which helps the ribosome interact with GTP-bound translation factors. Is thus essential for accurate translation. The protein is Large ribosomal subunit protein bL12 of Clostridium acetobutylicum (strain ATCC 824 / DSM 792 / JCM 1419 / IAM 19013 / LMG 5710 / NBRC 13948 / NRRL B-527 / VKM B-1787 / 2291 / W).